Here is a 140-residue protein sequence, read N- to C-terminus: MKFTKIATPEQIDQKWVLIDAEGKTFGRIITEVATLLRGKNKPCFTPNIDCGDYVVVVNASKAKFNGLGKIANKEYFSYSGYFGSVKSTKMTELLEKNPEKLYKLATRGMLPKTKLGAKMIKKLKIYASAEHPHSAQLAK.

The protein belongs to the universal ribosomal protein uL13 family. As to quaternary structure, part of the 50S ribosomal subunit.

Functionally, this protein is one of the early assembly proteins of the 50S ribosomal subunit, although it is not seen to bind rRNA by itself. It is important during the early stages of 50S assembly. The chain is Large ribosomal subunit protein uL13 from Sulfurimonas denitrificans (strain ATCC 33889 / DSM 1251) (Thiomicrospira denitrificans (strain ATCC 33889 / DSM 1251)).